The chain runs to 242 residues: 4-hydroxy-tetrahydrodipicolinate reductase (242 aa).

Residues 8 to 13 (GAKGRM), 75 to 77 (GTT), and 99 to 102 (ATNM) each bind NAD(+). His-131 serves as the catalytic Proton donor/acceptor. A (S)-2,3,4,5-tetrahydrodipicolinate-binding site is contributed by His-132. Lys-135 (proton donor) is an active-site residue. 141 to 142 (GT) contributes to the (S)-2,3,4,5-tetrahydrodipicolinate binding site.

Belongs to the DapB family.

It localises to the cytoplasm. The catalysed reaction is (S)-2,3,4,5-tetrahydrodipicolinate + NAD(+) + H2O = (2S,4S)-4-hydroxy-2,3,4,5-tetrahydrodipicolinate + NADH + H(+). It carries out the reaction (S)-2,3,4,5-tetrahydrodipicolinate + NADP(+) + H2O = (2S,4S)-4-hydroxy-2,3,4,5-tetrahydrodipicolinate + NADPH + H(+). The protein operates within amino-acid biosynthesis; L-lysine biosynthesis via DAP pathway; (S)-tetrahydrodipicolinate from L-aspartate: step 4/4. Its function is as follows. Catalyzes the conversion of 4-hydroxy-tetrahydrodipicolinate (HTPA) to tetrahydrodipicolinate. The chain is 4-hydroxy-tetrahydrodipicolinate reductase from Campylobacter jejuni subsp. jejuni serotype O:2 (strain ATCC 700819 / NCTC 11168).